We begin with the raw amino-acid sequence, 358 residues long: Peptide chain release factor 1 (358 aa).

Position 235 is an N5-methylglutamine (glutamine 235).

The protein belongs to the prokaryotic/mitochondrial release factor family. In terms of processing, methylated by PrmC. Methylation increases the termination efficiency of RF1.

The protein localises to the cytoplasm. Functionally, peptide chain release factor 1 directs the termination of translation in response to the peptide chain termination codons UAG and UAA. This Neisseria meningitidis serogroup B (strain ATCC BAA-335 / MC58) protein is Peptide chain release factor 1.